Reading from the N-terminus, the 502-residue chain is Sodium/proline symporter (502 aa).

Over methionine 1–threonine 5 the chain is Periplasmic. The helical transmembrane segment at proline 6 to tryptophan 26 threads the bilayer. The Cytoplasmic segment spans residues arginine 27–serine 41. Hydrophilic stretches follow at residues arginine 27–glycine 66 and isoleucine 88–isoleucine 124. A helical membrane pass occupies residues leucine 42–methionine 62. Over glycine 63–alanine 67 the chain is Periplasmic. Residues valine 68 to isoleucine 88 traverse the membrane as a helical segment. Residues asparagine 89 to arginine 126 lie on the Cytoplasmic side of the membrane. Residues isoleucine 127–alanine 147 form a helical membrane-spanning segment. Topologically, residues glycine 148–threonine 162 are periplasmic. A hydrophilic region spans residues leucine 151 to threonine 162. Residues alanine 163 to valine 183 traverse the membrane as a helical segment. Residues serine 184–serine 192 lie on the Cytoplasmic side of the membrane. The hydrophilic stretch occupies residues tryptophan 185–valine 189. The chain crosses the membrane as a helical span at residues leucine 193 to glycine 213. 3 hydrophilic regions span residues aspartate 214 to lysine 231, phenylalanine 249 to serine 274, and phenylalanine 296 to glutamine 319. At aspartate 214–asparagine 234 the chain is on the periplasmic side. A helical transmembrane segment spans residues phenylalanine 235 to leucine 255. Topologically, residues alanine 256–methionine 275 are cytoplasmic. The chain crosses the membrane as a helical span at residues threonine 276 to phenylalanine 296. The Periplasmic portion of the chain corresponds to asparagine 297–glutamine 319. A helical membrane pass occupies residues isoleucine 320–serine 340. At threonine 341–glutamate 370 the chain is on the cytoplasmic side. The hydrophilic stretch occupies residues threonine 341–glutamate 370. Residues leucine 371–alanine 391 traverse the membrane as a helical segment. Over asparagine 392 to valine 397 the chain is Periplasmic. A hydrophilic region spans residues asparagine 392–valine 397. Residues leucine 398–phenylalanine 418 traverse the membrane as a helical segment. The Cytoplasmic portion of the chain corresponds to serine 419 to arginine 427. 2 hydrophilic regions span residues arginine 424 to alanine 430 and glutamine 446 to glycine 448. 2 consecutive transmembrane segments (helical) span residues asparagine 428 to glycine 448 and tryptophan 449 to phenylalanine 469. Residues serine 470 to serine 502 are Cytoplasmic-facing. The interval proline 476–serine 502 is hydrophilic.

Belongs to the sodium:solute symporter (SSF) (TC 2.A.21) family. As to quaternary structure, has been isolated from inner membrane preparations as a homodimer.

It localises to the cell inner membrane. It carries out the reaction L-proline(in) + Na(+)(in) = L-proline(out) + Na(+)(out). Activity is stimulated by phosphatidylethanolamine and phosphatidylglycerol, but not by phosphatidylcholine and cardiolipin. Proline uptake is inhibited by the sulfhydryl reagent N-ethylmaleimide (NEM). Proline, in the presence of Na(+) or Li(+), protects the carrier functions from NEM-inactivation. Its function is as follows. Catalyzes the sodium-dependent uptake of extracellular L-proline. This protein is also capable of using lithium as the transport cation. Also catalyzes the uptake of propionate. This chain is Sodium/proline symporter (putP), found in Escherichia coli (strain K12).